A 1240-amino-acid chain; its full sequence is Serine/threonine-protein kinase TAO2 (1240 aa).

Serine 9 bears the Phosphoserine mark. Residues 28 to 281 (FSDLREIGHG…SEVLLKHRFV (254 aa)) form the Protein kinase domain. ATP is bound by residues 34–42 (IGHGSFGAV) and lysine 57. Aspartate 151 serves as the catalytic Proton acceptor. Serine 181 is subject to Phosphoserine. Positions 320–463 (APNGPGAEAP…PTSTSSSARR (144 aa)) are disordered. Low complexity predominate over residues 356 to 380 (SSHSVPSMSISASSQSSSVNSLADA). Residues 381-401 (SDNEEEEEEEEEEEEEEEEEG) are compositionally biased toward acidic residues. Positions 402-417 (PESREMAMMQEGEHTV) are enriched in basic and acidic residues. At serine 422 the chain carries Phosphoserine. 2 coiled-coil regions span residues 493–528 (SALR…EEHS) and 581–608 (KELA…LQEN). Serine 663 is modified (phosphoserine). The stretch at 688 to 720 (LRQHEATRELELRQLQAVQRTRAELTRLQHQTE) forms a coiled coil. A phosphoserine mark is found at serine 782, serine 830, and serine 832. The stretch at 805–934 (RILGKEGTTL…GDGCPSPDIP (130 aa)) forms a coiled coil. The disordered stretch occupies residues 899–946 (VLTPVPEEEEEEEEEGGAPIGTHRDPGDGCPSPDIPPEPPPSHLRQYP). A compositionally biased stretch (acidic residues) spans 904–914 (PEEEEEEEEEG). A compositionally biased stretch (pro residues) spans 931–940 (PDIPPEPPPS). The next 5 helical transmembrane spans lie at 972–992 (LLPL…GGGL), 994–1014 (AALL…LFLC), 1019–1039 (LPPG…VLSL), 1045–1065 (LMGV…SLAL), and 1175–1195 (LASC…LLKG). At leucine 999 the chain carries Omega-N-methylarginine. The residue at position 1037 (leucine 1037) is a Phosphoserine. Residues 1212–1240 (LGLSASRQLPPGTVAGRRSQTRRTLPPWR) are disordered.

The protein belongs to the protein kinase superfamily. STE Ser/Thr protein kinase family. STE20 subfamily. As to quaternary structure, interacts with MAP2K3 and MAP2K6. Self-associates. Interacts with tubulins. Interacts with MAP3K7 and interferes with MAP3K7-binding to CHUK and thus prevents NF-kappa-B activation. Isoform 2 interacts with PCDH8; this complex may also include CDH2. The cofactor is Mg(2+). In terms of processing, autophosphorylated. Phosphorylated by ATM. Phosphorylated on Ser-1037 by MAPK14. This phosphorylation is required PCDH8 for endocytosis.

It localises to the cytoplasmic vesicle membrane. Its subcellular location is the cytoplasm. It is found in the cytoskeleton. The protein resides in the cell projection. The protein localises to the dendrite. It catalyses the reaction L-seryl-[protein] + ATP = O-phospho-L-seryl-[protein] + ADP + H(+). The catalysed reaction is L-threonyl-[protein] + ATP = O-phospho-L-threonyl-[protein] + ADP + H(+). Functionally, serine/threonine-protein kinase involved in different processes such as membrane blebbing and apoptotic bodies formation DNA damage response and MAPK14/p38 MAPK stress-activated MAPK cascade. Phosphorylates itself, MBP, activated MAPK8, MAP2K3, MAP2K6 and tubulins. Activates the MAPK14/p38 MAPK signaling pathway through the specific activation and phosphorylation of the upstream MAP2K3 and MAP2K6 kinases. In response to DNA damage, involved in the G2/M transition DNA damage checkpoint by activating the p38/MAPK14 stress-activated MAPK cascade, probably by mediating phosphorylation of upstream MAP2K3 and MAP2K6 kinases. May affect microtubule organization and stability. May play a role in the osmotic stress-MAPK8 pathway. Prevents MAP3K7-mediated activation of CHUK, and thus NF-kappa-B activation. Isoform 2, but not isoform 1, is required for PCDH8 endocytosis. Following homophilic interactions between PCDH8 extracellular domains, isoform 2 phosphorylates and activates MAPK14/p38 MAPK which in turn phosphorylates isoform 2. This process leads to PCDH8 endocytosis and CDH2 cointernalization. Both isoforms are involved in MAPK14/p38 MAPK activation. The protein is Serine/threonine-protein kinase TAO2 (Taok2) of Mus musculus (Mouse).